A 489-amino-acid chain; its full sequence is Alpha-amylase (489 aa).

An N-terminal signal peptide occupies residues 1–16; the sequence is HFKPILVLCLATLALG. Residues C44 and C102 are joined by a disulfide bond. Residues N116, R164, and D173 each contribute to the Ca(2+) site. A disulfide bond links C152 and C166. R201 contributes to the chloride binding site. The active-site Nucleophile is D203. Residue H207 participates in Ca(2+) binding. The active-site Proton donor is the E240. Positions 303 and 339 each coordinate chloride. Cystine bridges form between C372-C378 and C443-C455.

It belongs to the glycosyl hydrolase 13 family. Monomer. It depends on Ca(2+) as a cofactor. Requires chloride as cofactor.

It catalyses the reaction Endohydrolysis of (1-&gt;4)-alpha-D-glucosidic linkages in polysaccharides containing three or more (1-&gt;4)-alpha-linked D-glucose units.. The polypeptide is Alpha-amylase (Tribolium castaneum (Red flour beetle)).